The chain runs to 217 residues: Probable nicotinate-nucleotide adenylyltransferase (217 aa).

Belongs to the NadD family.

It catalyses the reaction nicotinate beta-D-ribonucleotide + ATP + H(+) = deamido-NAD(+) + diphosphate. The protein operates within cofactor biosynthesis; NAD(+) biosynthesis; deamido-NAD(+) from nicotinate D-ribonucleotide: step 1/1. Functionally, catalyzes the reversible adenylation of nicotinate mononucleotide (NaMN) to nicotinic acid adenine dinucleotide (NaAD). The chain is Probable nicotinate-nucleotide adenylyltransferase from Baumannia cicadellinicola subsp. Homalodisca coagulata.